The following is an 87-amino-acid chain: Small ribosomal subunit protein uS15 (87 aa).

It belongs to the universal ribosomal protein uS15 family. Part of the 30S ribosomal subunit. Forms a bridge to the 50S subunit in the 70S ribosome, contacting the 23S rRNA.

Functionally, one of the primary rRNA binding proteins, it binds directly to 16S rRNA where it helps nucleate assembly of the platform of the 30S subunit by binding and bridging several RNA helices of the 16S rRNA. Its function is as follows. Forms an intersubunit bridge (bridge B4) with the 23S rRNA of the 50S subunit in the ribosome. The sequence is that of Small ribosomal subunit protein uS15 from Clostridium beijerinckii (strain ATCC 51743 / NCIMB 8052) (Clostridium acetobutylicum).